Here is a 309-residue protein sequence, read N- to C-terminus: Ribosomal RNA small subunit methyltransferase H (309 aa).

S-adenosyl-L-methionine is bound by residues 41–43, Asp61, Phe85, Asp102, and Gln109; that span reads GGH.

This sequence belongs to the methyltransferase superfamily. RsmH family.

The protein localises to the cytoplasm. The enzyme catalyses cytidine(1402) in 16S rRNA + S-adenosyl-L-methionine = N(4)-methylcytidine(1402) in 16S rRNA + S-adenosyl-L-homocysteine + H(+). Functionally, specifically methylates the N4 position of cytidine in position 1402 (C1402) of 16S rRNA. The protein is Ribosomal RNA small subunit methyltransferase H of Albidiferax ferrireducens (strain ATCC BAA-621 / DSM 15236 / T118) (Rhodoferax ferrireducens).